The following is a 274-amino-acid chain: MAIVKCKPTSPGRRFVVKVVNQELHKGAPHAPLLEKKSKSGGRNNNGRITTRHVGGGHKQHYRLVDFRRNDKDGIPATVERIEYDPNRTAHIALLCYADGERRYIIAPKGVSAGDQLIAGALAPIKAGNSLQLRNIPVGSTIHGIELKPGKGAQIARSAGASAQLIAREGVYVTLRLRSGEMRKVLAECRATLGEVSNSEHSLRSLGKAGAKRWRGVRPTVRGVAMNPVDHPHGGGEGRTSGGRHPVSPWGFPTKGAKTRGNKRTDNMIVRRRK.

Disordered regions lie at residues 28–55 (APHA…RHVG) and 224–274 (VAMN…RRRK).

The protein belongs to the universal ribosomal protein uL2 family. In terms of assembly, part of the 50S ribosomal subunit. Forms a bridge to the 30S subunit in the 70S ribosome.

Functionally, one of the primary rRNA binding proteins. Required for association of the 30S and 50S subunits to form the 70S ribosome, for tRNA binding and peptide bond formation. It has been suggested to have peptidyltransferase activity; this is somewhat controversial. Makes several contacts with the 16S rRNA in the 70S ribosome. In Pseudomonas putida (strain W619), this protein is Large ribosomal subunit protein uL2.